The following is an 888-amino-acid chain: Leukocyte tyrosine kinase receptor (888 aa).

The N-terminal stretch at 1 to 16 (MGCSHRLLLWLGAAGT) is a signal peptide. The Extracellular portion of the chain corresponds to 17 to 421 (ILCSNSEFQT…CMDLPTTASP (405 aa)). Intrachain disulfides connect C73–C86 and C168–C179. The interval 226-294 (LVAAGGGGRS…RSPREGAEGG (69 aa)) is disordered. Gly residues predominate over residues 260-273 (GSGGRGGAAGGGSG). C297 and C319 are joined by a disulfide. N-linked (GlcNAc...) asparagine glycosylation is found at N377 and N409. A helical membrane pass occupies residues 422–446 (LILMGAVVAALALSLLMMCAVLILV). The Cytoplasmic portion of the chain corresponds to 447 to 888 (NQKCQGLWGT…SSSSSIPGIQ (442 aa)). The Protein kinase domain occupies 506–782 (VTLLRALGHG…IQYCTQDPDV (277 aa)). ATP contacts are provided by residues 512–520 (LGHGAFGEV) and K540. The Proton acceptor role is filled by D639. Y672 carries the post-translational modification Phosphotyrosine; by autocatalysis. Residues 857-888 (TYGSWTPRGPQGEDTGIEHCNGSSSSSIPGIQ) form a disordered region. The segment covering 877–888 (NGSSSSSIPGIQ) has biased composition (polar residues).

Belongs to the protein kinase superfamily. Tyr protein kinase family. Insulin receptor subfamily. As to quaternary structure, homodimer; homodimerizes following ligand-binding. Part of a complex including LTK, TNK2 and GRB2, in which GRB2 promotes LTK recruitment by TNK2. In terms of processing, phosphorylated at tyrosine residues by autocatalysis, which activates kinase activity. As to expression, subsets of lymphoid and neuronal cells.

The protein resides in the cell membrane. The protein localises to the endoplasmic reticulum. The catalysed reaction is L-tyrosyl-[protein] + ATP = O-phospho-L-tyrosyl-[protein] + ADP + H(+). Activated by ligand-binding, leading to homodimerization and autophosphorylation. In terms of biological role, receptor with a tyrosine-protein kinase activity. Following activation by ALKAL1 or ALKAL2 ligands at the cell surface, transduces an extracellular signal into an intracellular response. Ligand-binding to the extracellular domain induces tyrosine kinase activation, leading to activation of the mitogen-activated protein kinase (MAPK) pathway. Phosphorylates almost exclusively at the first tyrosine of the Y-x-x-x-Y-Y motif. The exact function of this protein is not known; studies with chimeric proteins demonstrate its ability to promote growth and specifically neurite outgrowth, and cell survival. Involved in regulation of the secretory pathway involving endoplasmic reticulum (ER) export sites (ERESs) and ER to Golgi transport. This chain is Leukocyte tyrosine kinase receptor, found in Mus musculus (Mouse).